The sequence spans 373 residues: tRNA N6-adenosine threonylcarbamoyltransferase (373 aa).

3 residues coordinate a divalent metal cation: H133, H137, and Y154. Substrate is bound by residues 154 to 158 (YVSGG), D186, G201, E205, and N302. Residue D331 participates in a divalent metal cation binding.

The protein belongs to the KAE1 / TsaD family. In terms of assembly, component of the EKC/KEOPS complex composed of at least BUD32, CGI121, GON7, KAE1 and PCC1; the whole complex dimerizes. The cofactor is a divalent metal cation.

Its subcellular location is the cytoplasm. The protein resides in the nucleus. The catalysed reaction is L-threonylcarbamoyladenylate + adenosine(37) in tRNA = N(6)-L-threonylcarbamoyladenosine(37) in tRNA + AMP + H(+). Component of the EKC/KEOPS complex that is required for the formation of a threonylcarbamoyl group on adenosine at position 37 (t(6)A37) in tRNAs that read codons beginning with adenine. The complex is probably involved in the transfer of the threonylcarbamoyl moiety of threonylcarbamoyl-AMP (TC-AMP) to the N6 group of A37. KAE1 likely plays a direct catalytic role in this reaction, but requires other protein(s) of the complex to fulfill this activity. The EKC/KEOPS complex also promotes both telomere uncapping and telomere elongation. The complex is required for efficient recruitment of transcriptional coactivators. The protein is tRNA N6-adenosine threonylcarbamoyltransferase of Debaryomyces hansenii (strain ATCC 36239 / CBS 767 / BCRC 21394 / JCM 1990 / NBRC 0083 / IGC 2968) (Yeast).